Consider the following 210-residue polypeptide: T-cell surface glycoprotein CD8 beta chain (210 aa).

Positions 1–21 (MRPRLWLLLAAQLAVLHGSSV) are cleaved as a signal peptide. The region spanning 22–132 (LQQTPAYIKV…ELTFGKGTQL (111 aa)) is the Ig-like V-type domain. Over 22-170 (LQQTPAYIKV…ETQKGPLCSP (149 aa)) the chain is Extracellular. Residues C41 and C116 are joined by a disulfide bond. N102 carries an N-linked (GlcNAc...) asparagine glycan. The helical transmembrane segment at 171-191 (ITLGLLVAGVLVLLVSLGVAI) threads the bilayer. Over 192–210 (HLCCRRRRARLRFMKQFYK) the chain is Cytoplasmic.

As to quaternary structure, forms disulfide-linked heterodimers with CD8A at the cell surface. Interacts with CD3D; this interaction couples TCR-CD3 with CD8. Interacts with LCK. Post-translationally, phosphorylated as a consequence of T-cell activation. In terms of processing, palmitoylated at the cytoplasmic tail and thereby targets the heterodimer CD8A/CD8B to lipid rafts unlike CD8A homodimers.

It localises to the cell membrane. In terms of biological role, integral membrane glycoprotein that plays an essential role in the immune response and serves multiple functions in responses against both external and internal offenses. In T-cells, functions primarily as a coreceptor for MHC class I molecule:peptide complex. The antigens presented by class I peptides are derived from cytosolic proteins while class II derived from extracellular proteins. Interacts simultaneously with the T-cell receptor (TCR) and the MHC class I proteins presented by antigen presenting cells (APCs). In turn, recruits the Src kinase LCK to the vicinity of the TCR-CD3 complex. A palmitoylation site in the cytoplasmic tail of CD8B chain contributes to partitioning of CD8 into the plasma membrane lipid rafts where signaling proteins are enriched. Once LCK recruited, it initiates different intracellular signaling pathways by phosphorylating various substrates ultimately leading to lymphokine production, motility, adhesion and activation of cytotoxic T-lymphocytes (CTLs). Additionally, plays a critical role in thymic selection of CD8+ T-cells. This is T-cell surface glycoprotein CD8 beta chain (CD8B) from Pongo pygmaeus (Bornean orangutan).